The following is a 366-amino-acid chain: Methyltransferase phm5 (366 aa).

S-adenosyl-L-methionine-binding positions include 204-205 (GG), aspartate 230, 255-256 (SM), arginine 273, and arginine 274.

Belongs to the class I-like SAM-binding methyltransferase superfamily. Cation-independent O-methyltransferase family.

It functions in the pathway secondary metabolite biosynthesis. In terms of biological role, methyltransferase; part of the gene cluster that mediates the biosynthesis of the trans-fused decalin-containing tetramic acid phomasetin, the stereochemical opposite of the HIV-1 integrase inhibitor equisetin. The PKS module of phm1 together with the enoylreductase phm4 catalyze the formation of the polyketide unit which is then conjugated to L-serine by the condensation domain of the phm1 NRPS module. Activity of the Dieckmann cyclase domain (RED) of phm1 results in release of the Dieckmann product intermediate. The Diels-Alderase phm7 then uses the Dieckmann product of phm1 as substrate and catalyzes the Diels-Alder cycloaddition to form the decalin ring of N-desmethylphomasetin. N-desmethylphomasetin is further methylated to phomasetin by the methyltransferase phm5. The chain is Methyltransferase phm5 from Pyrenochaetopsis sp.